A 399-amino-acid chain; its full sequence is tRNA-specific 2-thiouridylase MnmA (399 aa).

Residues 21 to 28 (AMSGGVDS) and leucine 47 contribute to the ATP site. Cysteine 115 (nucleophile) is an active-site residue. Cysteine 115 and cysteine 211 form a disulfide bridge. Glycine 139 contacts ATP. The segment at 161-163 (RDQ) is interaction with tRNA. Cysteine 211 acts as the Cysteine persulfide intermediate in catalysis.

This sequence belongs to the MnmA/TRMU family.

The protein resides in the cytoplasm. The enzyme catalyses S-sulfanyl-L-cysteinyl-[protein] + uridine(34) in tRNA + AH2 + ATP = 2-thiouridine(34) in tRNA + L-cysteinyl-[protein] + A + AMP + diphosphate + H(+). Functionally, catalyzes the 2-thiolation of uridine at the wobble position (U34) of tRNA, leading to the formation of s(2)U34. The protein is tRNA-specific 2-thiouridylase MnmA of Parvibaculum lavamentivorans (strain DS-1 / DSM 13023 / NCIMB 13966).